A 182-amino-acid chain; its full sequence is Putative lipoprotein LpqE (182 aa).

The signal sequence occupies residues M1–G29. The N-palmitoyl cysteine moiety is linked to residue C30. C30 is lipidated: S-diacylglycerol cysteine.

The protein localises to the cell membrane. This chain is Putative lipoprotein LpqE (lpqE), found in Mycobacterium bovis (strain ATCC BAA-935 / AF2122/97).